The sequence spans 542 residues: Endonuclease 4 homolog (542 aa).

Disordered stretches follow at residues 89–123 and 141–234; these read NEEI…QTSI and PFFS…ENKF. 2 stretches are compositionally biased toward low complexity: residues 99-115 and 147-170; these read SKKL…QQSK and NNAS…TTTT. The stretch at 171 to 206 forms a coiled coil; the sequence is TKKRNNKDEENEDDNEEEEEEEEEEEDKKSKKKTTT. Residues 179-196 show a composition bias toward acidic residues; that stretch reads EENEDDNEEEEEEEEEEE. Residues 205–215 show a composition bias toward low complexity; that stretch reads TTTTTTTTTTA. Residues 216-227 are compositionally biased toward basic residues; the sequence is YKKKSSPKKKKV. Positions 222–227 match the Nuclear localization signal motif; that stretch reads PKKKKV. Zn(2+)-binding residues include H328, H368, E404, D438, H441, H475, D488, H490, and E520.

Belongs to the AP endonuclease 2 family. Requires Zn(2+) as cofactor.

It is found in the nucleus. It carries out the reaction Endonucleolytic cleavage to 5'-phosphooligonucleotide end-products.. Its function is as follows. Plays a role in DNA repair. It cleaves phosphodiester bonds at apurinic or apyrimidinic sites (AP sites) to produce new 5'-ends that are base-free deoxyribose 5-phosphate residues. The sequence is that of Endonuclease 4 homolog (apnA) from Dictyostelium discoideum (Social amoeba).